A 241-amino-acid chain; its full sequence is Carboxy-S-adenosyl-L-methionine synthase (241 aa).

S-adenosyl-L-methionine contacts are provided by residues tyrosine 38, 63–65 (GCS), 88–89 (DN), 116–117 (DI), asparagine 131, and arginine 198.

This sequence belongs to the class I-like SAM-binding methyltransferase superfamily. Cx-SAM synthase family. Homodimer.

The catalysed reaction is prephenate + S-adenosyl-L-methionine = carboxy-S-adenosyl-L-methionine + 3-phenylpyruvate + H2O. Functionally, catalyzes the conversion of S-adenosyl-L-methionine (SAM) to carboxy-S-adenosyl-L-methionine (Cx-SAM). The protein is Carboxy-S-adenosyl-L-methionine synthase of Histophilus somni (strain 129Pt) (Haemophilus somnus).